The primary structure comprises 250 residues: Probable transcriptional regulatory protein PERMA_0079 (250 aa).

It belongs to the TACO1 family.

The protein resides in the cytoplasm. This chain is Probable transcriptional regulatory protein PERMA_0079, found in Persephonella marina (strain DSM 14350 / EX-H1).